Here is a 244-residue protein sequence, read N- to C-terminus: Deoxynucleotide monophosphate kinase (244 aa).

Lysine 10 serves as a coordination point for dGMP. Positions 11, 13, 15, and 16 each coordinate ATP. Positions 36, 37, 70, 137, 144, 145, 149, 157, 180, 182, 183, 186, and 213 each coordinate dGMP.

This sequence belongs to the dNMP kinase family. As to quaternary structure, homodimer. Mg(2+) is required as a cofactor.

It catalyses the reaction dTMP + ATP = dTDP + ADP. It carries out the reaction dGMP + ATP = dGDP + ADP. The enzyme catalyses 5-hydroxymethyl-dCMP + ATP = 5-hydroxymethyl-dCDP + ADP. Allows the synthesis of deoxyribonucleoside triphosphates necessary for the rapid viral DNA replication. Phosphorylates dGMP, dTMP and 5-hydroxymethyl-dCMP (hmdCMP) while excluding dCMP and dAMP. The phosphorylation of 5-hydroxymethyl-dCMP represents the first step in the replacement of cytosine by hydroxymethylcytosine in new viral DNA genomes. The polypeptide is Deoxynucleotide monophosphate kinase (1) (Escherichia phage RB69 (Bacteriophage RB69)).